The chain runs to 125 residues: Mesotocin-neurophysin MT (125 aa).

The signal sequence occupies residues Met-1–Ala-19. A disulfide bridge links Cys-20 with Cys-25. Position 28 is a glycine amide (Gly-28). 7 cysteine pairs are disulfide-bonded: Cys-42–Cys-86, Cys-45–Cys-59, Cys-53–Cys-76, Cys-60–Cys-66, Cys-93–Cys-106, Cys-100–Cys-118, and Cys-107–Cys-112.

It belongs to the vasopressin/oxytocin family. In terms of tissue distribution, mesotocin is produced by magnocellular preoptic neurons in the hypothalamus in amphibians, reptiles and birds.

The protein resides in the secreted. Mesotocin is a diuretic hormone. This Bufo japonicus (Japanese common toad) protein is Mesotocin-neurophysin MT.